The chain runs to 429 residues: MTSYRSSSASYYSGSSSKGGFGSRSLAGSNSYGGSSFGAGFSSGVGSGFSSSGGNFAMAEAASSSFGGNEKHAMQNLNDRLASYLEKVRALEATNSDLEGKIRNWYDKQSDAGIGAGSKDYSKYFEIIAELRNKIRAATIDNATVTLQIDNARLAADDFRLKFENELALRQSVEGDSNGLRRVLDELILARGDFELQIESLTEELAYLKKNHEEEMSHAKSQSAGKVSVEMDAALGVDLTSILNNMRADYEILAEKNRRDAELWFNQKSGELKKEISVGVEQVQASKSEITELKRSLQSLEIELQSQLAMKQSVEGNLNELQGFYSSQLQQIQNTIGSLEEQLLQIRSDMEHQNTEYKLLLDIKTRLEMEIQTYRRLLEGELGQVTTVANTSSVESKTESSSTSTTRTRMVKTIVEEVVDGKVVSSRVE.

A compositionally biased stretch (low complexity) spans 1-16 (MTSYRSSSASYYSGSS). The interval 1–20 (MTSYRSSSASYYSGSSSKGG) is disordered. Residues 1 to 69 (MTSYRSSSAS…EAASSSFGGN (69 aa)) are head. Residues 70–105 (EKHAMQNLNDRLASYLEKVRALEATNSDLEGKIRNW) form a coil 1A region. One can recognise an IF rod domain in the interval 70-385 (EKHAMQNLND…RLLEGELGQV (316 aa)). Residues 106–127 (YDKQSDAGIGAGSKDYSKYFEI) form a linker 1 region. Residues 128-219 (IAELRNKIRA…KNHEEEMSHA (92 aa)) are coil 1B. A linker 12 region spans residues 220–242 (KSQSAGKVSVEMDAALGVDLTSI). Residues 243-381 (LNNMRADYEI…QTYRRLLEGE (139 aa)) are coil 2. The segment at 382–429 (LGQVTTVANTSSVESKTESSSTSTTRTRMVKTIVEEVVDGKVVSSRVE) is tail. Residues 389–408 (ANTSSVESKTESSSTSTTRT) are disordered. Residues 391-408 (TSSVESKTESSSTSTTRT) are compositionally biased toward low complexity.

The protein belongs to the intermediate filament family. Heterotetramer of two type I and two type II keratins.

This Xenopus laevis (African clawed frog) protein is Keratin, type I cytoskeletal 47 kDa (xk81a1).